The primary structure comprises 238 residues: MNPEQFQMALAEKGIELSDDQMKQFHDYFEMLVEWNEKMNLTAITDEKEVYLKHFYDSISAAFYVDFTKFDTICDVGAGAGFPSLPIKICFPHLKVSIVDSLKKRMTFLDALAEKLGLTDVHFYHDRAETFGQNKAHREKYDLVTARAVARMSVLSELCMPLVKKGGSFLVMKAAQAEQELQTAEKAIKLFGGKVEEHFSFSLPVEESERNIYVITKTKETPNKYPRKPGTPNKLPIE.

S-adenosyl-L-methionine is bound by residues G77, F82, 128–129 (AE), and R147. The disordered stretch occupies residues 219 to 238 (KETPNKYPRKPGTPNKLPIE).

Belongs to the methyltransferase superfamily. RNA methyltransferase RsmG family.

Its subcellular location is the cytoplasm. Its function is as follows. Specifically methylates the N7 position of guanine in position 535 of 16S rRNA. This Listeria monocytogenes serovar 1/2a (strain ATCC BAA-679 / EGD-e) protein is Ribosomal RNA small subunit methyltransferase G.